We begin with the raw amino-acid sequence, 398 residues long: Dual-specificity RNA methyltransferase RlmN (398 aa).

Residue Glu100 is the Proton acceptor of the active site. Residues Asp106–Asp345 enclose the Radical SAM core domain. The cysteines at positions 113 and 350 are disulfide-linked. Positions 120, 124, and 127 each coordinate [4Fe-4S] cluster. Residues Gly174 to Glu175, Ser206, Ser228 to His230, and Asn307 contribute to the S-adenosyl-L-methionine site. Cys350 acts as the S-methylcysteine intermediate in catalysis.

This sequence belongs to the radical SAM superfamily. RlmN family. It depends on [4Fe-4S] cluster as a cofactor.

The protein localises to the cytoplasm. The enzyme catalyses adenosine(2503) in 23S rRNA + 2 reduced [2Fe-2S]-[ferredoxin] + 2 S-adenosyl-L-methionine = 2-methyladenosine(2503) in 23S rRNA + 5'-deoxyadenosine + L-methionine + 2 oxidized [2Fe-2S]-[ferredoxin] + S-adenosyl-L-homocysteine. The catalysed reaction is adenosine(37) in tRNA + 2 reduced [2Fe-2S]-[ferredoxin] + 2 S-adenosyl-L-methionine = 2-methyladenosine(37) in tRNA + 5'-deoxyadenosine + L-methionine + 2 oxidized [2Fe-2S]-[ferredoxin] + S-adenosyl-L-homocysteine. Functionally, specifically methylates position 2 of adenine 2503 in 23S rRNA and position 2 of adenine 37 in tRNAs. m2A2503 modification seems to play a crucial role in the proofreading step occurring at the peptidyl transferase center and thus would serve to optimize ribosomal fidelity. The sequence is that of Dual-specificity RNA methyltransferase RlmN from Saccharophagus degradans (strain 2-40 / ATCC 43961 / DSM 17024).